Reading from the N-terminus, the 460-residue chain is Flavin-containing monooxygenase FMO GS-OX-like 9 (460 aa).

20–25 (GAGPAG) provides a ligand contact to FAD. An NADP(+)-binding site is contributed by 222–227 (GNSMSG).

This sequence belongs to the FMO family. Requires FAD as cofactor.

In terms of biological role, catalyzes the conversion of methylthioalkyl glucosinolates of any chain length into methylsulfinylalkyl glucosinolates. This is Flavin-containing monooxygenase FMO GS-OX-like 9 from Arabidopsis thaliana (Mouse-ear cress).